Reading from the N-terminus, the 177-residue chain is Probable phospholipid hydroperoxide glutathione peroxidase (177 aa).

Cysteine 42 is a catalytic residue.

It belongs to the glutathione peroxidase family.

The protein resides in the cytoplasm. It carries out the reaction a hydroperoxy polyunsaturated fatty acid + 2 glutathione = a hydroxy polyunsaturated fatty acid + glutathione disulfide + H2O. Protects cells and enzymes from oxidative damage, by catalyzing the reduction of hydrogen peroxide, lipid peroxides and organic hydroperoxide, by glutathione. The protein is Probable phospholipid hydroperoxide glutathione peroxidase of Encephalitozoon cuniculi (strain GB-M1) (Microsporidian parasite).